The following is an 865-amino-acid chain: Protein fluG (865 aa).

Residues 442 to 533 (PGVKYVWTQF…VMTWWKSEQG (92 aa)) enclose the GS beta-grasp domain. The 326-residue stretch at 540-865 (PRTNLLNINN…ARRKWLVERY (326 aa)) folds into the GS catalytic domain.

It belongs to the glutamine synthetase family.

It is found in the cytoplasm. Its function is as follows. May function as a GSI-related enzyme in synthesizing a small diffusible factor that acts as an extracellular signal directing asexual sporulation and perhaps other aspects of colony growth. May be involved in brlA activation (an early transcriptional regulator for conidiation specific gene). This chain is Protein fluG (fluG), found in Emericella nidulans (strain FGSC A4 / ATCC 38163 / CBS 112.46 / NRRL 194 / M139) (Aspergillus nidulans).